Reading from the N-terminus, the 899-residue chain is Alanine--tRNA ligase, chloroplastic/mitochondrial (899 aa).

Residues His581, His585, Cys683, and His687 each contribute to the Zn(2+) site.

The protein belongs to the class-II aminoacyl-tRNA synthetase family. Monomer. Requires Zn(2+) as cofactor.

It is found in the plastid. The protein resides in the chloroplast. It localises to the mitochondrion. It catalyses the reaction tRNA(Ala) + L-alanine + ATP = L-alanyl-tRNA(Ala) + AMP + diphosphate. In terms of biological role, catalyzes the attachment of alanine to tRNA(Ala) in a two-step reaction: alanine is first activated by ATP to form Ala-AMP and then transferred to the acceptor end of tRNA(Ala). Also edits incorrectly charged tRNA(Ala) via its editing domain. This chain is Alanine--tRNA ligase, chloroplastic/mitochondrial, found in Micromonas pusilla (strain CCMP1545) (Picoplanktonic green alga).